The sequence spans 379 residues: Zinc metalloproteinase nas-20 (379 aa).

The signal sequence occupies residues 1–20 (MKITVNFLLVALIGVPSVLS). Residues 21 to 29 (DRHITRDKR) constitute a propeptide that is removed on maturation. The Peptidase M12A domain maps to 30-208 (QAMRDYAKWE…VLLNKFYGCN (179 aa)). N67 carries an N-linked (GlcNAc...) asparagine glycan. 4 cysteine pairs are disulfide-bonded: C70-C207, C91-C111, C209-C229, and C234-C243. Residue H119 coordinates Zn(2+). Residue E120 is part of the active site. The Zn(2+) site is built by H123 and H129. Residue N185 is glycosylated (N-linked (GlcNAc...) asparagine). The EGF-like domain maps to 203–244 (KFYGCNCDNHPRKLDCKNGGYQNPANCEECLCTDGFNGQLCD). N-linked (GlcNAc...) asparagine glycosylation is found at N337 and N370.

It depends on Zn(2+) as a cofactor.

The protein resides in the secreted. Its function is as follows. Metalloprotease. The sequence is that of Zinc metalloproteinase nas-20 (nas-20) from Caenorhabditis elegans.